Consider the following 674-residue polypeptide: Dymeclin (674 aa).

Residue G2 is the site of N-myristoyl glycine attachment.

It belongs to the dymeclin family. As to quaternary structure, interacts with GOLM1 and PPIB. In terms of processing, myristoylated in vitro; myristoylation is not essential for protein targeting to Golgi compartment.

Its subcellular location is the cytoplasm. The protein localises to the golgi apparatus. It is found in the membrane. Functionally, necessary for correct organization of Golgi apparatus. Involved in bone development. The chain is Dymeclin (Dym) from Rattus norvegicus (Rat).